The sequence spans 391 residues: Ferrochelatase (391 aa).

Residues His196 and Glu281 each contribute to the Fe cation site.

This sequence belongs to the ferrochelatase family.

It localises to the cytoplasm. The enzyme catalyses heme b + 2 H(+) = protoporphyrin IX + Fe(2+). It functions in the pathway porphyrin-containing compound metabolism; protoheme biosynthesis; protoheme from protoporphyrin-IX: step 1/1. Its function is as follows. Catalyzes the ferrous insertion into protoporphyrin IX. In Synechococcus sp. (strain CC9311), this protein is Ferrochelatase.